Consider the following 436-residue polypeptide: MQVSVETTQGLERRLTITVPAATVDAAVRKELNGLAKTRRIDGFRPGKAPVAIIKKMFGAMAHARVADEMMQNNFIKAIIENKLSPAGAPTMDPKEIQEGQDFEFTATFEVYPEFEVAGLETIKVEKPVATVKDEDLANMIDTLRKQHATWADVDAAAADGMRVTMDFIGSIDGEEFDGGKAEGFNLVLGAGRMIPGFEDAIMGKKAGDEFTIEVTFPADYHAENLKGKAAKFASKLIKVEEQILPELTEEFVKRFGIESGNVEELKAEVRKNMERELAQALKNSVKEQVLNGLVEANQIDLPKAAVAQEIDTLRQQALQRFGGFQGGNAPELPAELFQAQAERRVRVGLLLGDVIRTNEIKADDARVTSIIESMATAYEDPKEVIEYYQKNEQMLNGVRNLAVEDQAIDLILSKAQVTEKEVAFDEVINKSGAAA.

Positions 161–246 (GMRVTMDFIG…LIKVEEQILP (86 aa)) constitute a PPIase FKBP-type domain.

It belongs to the FKBP-type PPIase family. Tig subfamily.

The protein resides in the cytoplasm. The enzyme catalyses [protein]-peptidylproline (omega=180) = [protein]-peptidylproline (omega=0). Involved in protein export. Acts as a chaperone by maintaining the newly synthesized protein in an open conformation. Functions as a peptidyl-prolyl cis-trans isomerase. The polypeptide is Trigger factor (Aeromonas salmonicida (strain A449)).